Consider the following 316-residue polypeptide: Beta-ketoacyl-[acyl-carrier-protein] synthase III 1 (316 aa).

Residues C112 and H243 contribute to the active site. The segment at 244–248 is ACP-binding; that stretch reads QANYR. N273 is an active-site residue.

This sequence belongs to the thiolase-like superfamily. FabH family. In terms of assembly, homodimer.

The protein localises to the cytoplasm. It carries out the reaction malonyl-[ACP] + acetyl-CoA + H(+) = 3-oxobutanoyl-[ACP] + CO2 + CoA. It functions in the pathway lipid metabolism; fatty acid biosynthesis. Catalyzes the condensation reaction of fatty acid synthesis by the addition to an acyl acceptor of two carbons from malonyl-ACP. Catalyzes the first condensation reaction which initiates fatty acid synthesis and may therefore play a role in governing the total rate of fatty acid production. Possesses both acetoacetyl-ACP synthase and acetyl transacylase activities. Its substrate specificity determines the biosynthesis of branched-chain and/or straight-chain of fatty acids. The polypeptide is Beta-ketoacyl-[acyl-carrier-protein] synthase III 1 (Vibrio parahaemolyticus serotype O3:K6 (strain RIMD 2210633)).